A 74-amino-acid chain; its full sequence is Cytochrome c oxidase copper chaperone 1 (74 aa).

The segment at 1-30 (MTDQPAQNGLIPPPTSEPSKAAASAETKPK) is disordered. Cu cation contacts are provided by Cys-34 and Cys-35. One can recognise a CHCH domain in the interval 34–74 (CCACPDTKKLRDECIVEHGESACTKWIEAHKICLRAEGFNV). Short sequence motifs (cx9C motif) lie at residues 37-47 (CPDTKKLRDEC) and 56-66 (CTKWIEAHKIC). Cystine bridges form between Cys-37–Cys-66 and Cys-47–Cys-56.

The protein belongs to the COX17 family.

The protein resides in the mitochondrion intermembrane space. Its function is as follows. Copper chaperone for cytochrome c oxidase (COX). Binds 2 copper ions and delivers them to the Cu(A) site of COX. Can complement the yeast mutant cox17. The sequence is that of Cytochrome c oxidase copper chaperone 1 (COX17-1) from Arabidopsis thaliana (Mouse-ear cress).